A 293-amino-acid polypeptide reads, in one-letter code: Beta-porphyranase B (293 aa).

The N-terminal stretch at 1–21 is a signal peptide; that stretch reads MKLSNQFLITITLLITSITFA. Positions 38-291 constitute a GH16 domain; the sequence is QEWKLIENMS…WVRSWQLVDS (254 aa). Residues W67, R70, E156, E161, and E256 each coordinate substrate. The Nucleophile role is filled by E156. The active-site Proton donor is E161.

The protein belongs to the glycosyl hydrolase 16 family.

Its subcellular location is the periplasm. It carries out the reaction Hydrolysis of beta-D-galactopyranose-(1-&gt;4)-alpha-L-galactopyranose-6-sulfate linkages in porphyran.. In terms of biological role, cleaves the sulfated polysaccharide porphyran at the (1-&gt;4) linkages between beta-D-galactopyranose and alpha-L-galactopyranose-6-sulfate, forming mostly the disaccharide alpha-L-galactopyranose-6-sulfate-(1-&gt;3)-beta-D-galactose. Some longer oligosaccharides of even number of residues are also observed. Inactive on the non-sulfated agarose portion of the porphyran backbone. In contrast to PorA, tolerates the presence of 3-6-anhydro-L-galactose in subsite -2. This is Beta-porphyranase B (porB) from Zobellia galactanivorans (strain DSM 12802 / CCUG 47099 / CIP 106680 / NCIMB 13871 / Dsij).